The primary structure comprises 464 residues: Glutamate--tRNA ligase (464 aa).

Positions 8 to 18 (PSPTGYMHLGN) match the 'HIGH' region motif. 4 residues coordinate Zn(2+): Cys-96, Cys-98, Cys-123, and His-125. Residues 240–244 (KLSKR) carry the 'KMSKS' region motif. Lys-243 lines the ATP pocket.

The protein belongs to the class-I aminoacyl-tRNA synthetase family. Glutamate--tRNA ligase type 1 subfamily. Monomer. Requires Zn(2+) as cofactor.

The protein resides in the cytoplasm. It catalyses the reaction tRNA(Glu) + L-glutamate + ATP = L-glutamyl-tRNA(Glu) + AMP + diphosphate. Catalyzes the attachment of glutamate to tRNA(Glu) in a two-step reaction: glutamate is first activated by ATP to form Glu-AMP and then transferred to the acceptor end of tRNA(Glu). This is Glutamate--tRNA ligase from Hydrogenobaculum sp. (strain Y04AAS1).